The sequence spans 855 residues: MLLHETESEYDSKSKKNNYSYYESSDFKPLIEKYNRIKYSVTEYIYLLTVKNVVLFPDVVIPITAVKQKSINLFKSAYYTYKKIGILTKKYFNTTFSIAKLNIQTFNIYSFNKFNKINKFNKINKFNKINKFNKINKFNKINKFNKTNNIYYIGTVAKILKLLIMPDGNTTVILQGISRFKIIKLIQVYPYFKAEIIYLKDEKPQKKDKEYLILIDSIKEIAIKIIQDNYKIPSESSFAISNIESKSFLINFVAYNLNIEIKNKQILLEYDFLKQRAIETFRFLNIEYEKIKLKNDIQYRVRYDIDQQQKEYFLNQQIKALQEELGDFSYEKEVEVLRIKSYKKNWSKEAQNQFDRELSKLKRTNPQMPEYTILRNYLDLMLDLPWKKYSQDNYDLYRAQKILDKDHFGIDKVKERIIEYLSVLKLKGDLRSPILCFYGPPGVGKTSLGRSIASALNRKYVRISLGGLNDEAEIRGHRKTYIGAMPGRVLQSIKKAGTSNPVFVLDEIDKMGLGSQGNPSSAMLEVLDPEQNKEFYDNFLEMGYDLSKVIFIATANSLYTINIALLDRMEIIDMNGYTVEEKIEISKKHLIPKQLKENGLKSKDIILGVKQIEKIIESYTRESGVRSLEKNISKIVRYAAKNIAMNKKYLKRINMSKIEEVLGPPNDPEKYELIQVPGVVTGLAWTIVGGEIIYIESTLLKGRGNLSITGNVGEVMKESATIAFKYIKAHNYEFGIDEKMFELYNIHIHAPEGGIHKDGPSAGITMLTSIISSFLKKKIRPYLAMTGEITLRGKVLPVGGIKEKILAAKRANIKEIILSKANKKDIDDIKKVYLKGLKFHFVSKMNEVIDLSIIK.

The Lon N-terminal domain maps to 45-288 (IYLLTVKNVV…ETFRFLNIEY (244 aa)). 439–446 (GPPGVGKT) contacts ATP. The region spanning 674-855 (IQVPGVVTGL…NEVIDLSIIK (182 aa)) is the Lon proteolytic domain. Active-site residues include S761 and K804.

Belongs to the peptidase S16 family. Homohexamer. Organized in a ring with a central cavity.

It is found in the cytoplasm. The catalysed reaction is Hydrolysis of proteins in presence of ATP.. In terms of biological role, ATP-dependent serine protease that mediates the selective degradation of mutant and abnormal proteins as well as certain short-lived regulatory proteins. Required for cellular homeostasis and for survival from DNA damage and developmental changes induced by stress. Degrades polypeptides processively to yield small peptide fragments that are 5 to 10 amino acids long. Binds to DNA in a double-stranded, site-specific manner. In Karelsulcia muelleri (strain GWSS) (Sulcia muelleri), this protein is Lon protease.